The sequence spans 626 residues: Putative Xaa-Pro dipeptidyl-peptidase (626 aa).

Active-site charge relay system residues include Ser-231, Asp-348, and His-379.

This sequence belongs to the peptidase S15 family.

It carries out the reaction Hydrolyzes Xaa-Pro-|- bonds to release unblocked, N-terminal dipeptides from substrates including Ala-Pro-|-p-nitroanilide and (sequentially) Tyr-Pro-|-Phe-Pro-|-Gly-Pro-|-Ile.. In Rhodopirellula baltica (strain DSM 10527 / NCIMB 13988 / SH1), this protein is Putative Xaa-Pro dipeptidyl-peptidase.